Here is a 528-residue protein sequence, read N- to C-terminus: Equilibrative nucleoside transporter 4 (528 aa).

Residues 1-68 (MGSIGSQRLK…EEPVPDDRYH (68 aa)) lie on the Extracellular side of the membrane. A helical membrane pass occupies residues 69 to 89 (AIYFAMLLAGVGFLLPYNSFI). The Cytoplasmic segment spans residues 90-101 (TDVDYLHHKYPG). The helical transmembrane segment at 102–122 (TSIVFDMSLTYILVALAAVLL) threads the bilayer. Topologically, residues 123 to 139 (NNVVVERLNLHTRITTG) are extracellular. A helical membrane pass occupies residues 140–160 (YLLALGPLLFISICDVWLQLF). The Cytoplasmic portion of the chain corresponds to 161–166 (SHDQAY). Residues 167–187 (AINLAAVGTVAFGCTVQQSSF) form a helical membrane-spanning segment. The Extracellular segment spans residues 188 to 231 (YGYTGLLPKRYTQGVMTGESTAGVMISLSRILTKLLLPDERAST). The chain crosses the membrane as a helical span at residues 232–252 (IIFFLVSAGLELLCFLLHLLV). At 253–346 (RRSRFVLYYT…LLLHRYVVAR (94 aa)) the chain is on the cytoplasmic side. A helical transmembrane segment spans residues 347–367 (VIWADMLSIAVTYFITLCLFP). Residues 368–376 (GLESEIRHC) are Extracellular-facing. Residues 377–397 (VLGEWLPILVMAVFNLSDFVG) traverse the membrane as a helical segment. Topologically, residues 398 to 411 (KILAALPVEWRGTH) are cytoplasmic. The helical transmembrane segment at 412–432 (LLACSCLRVVFIPLFILCVYP) threads the bilayer. At 433 to 445 (SGMPALRHPAWPC) the chain is on the extracellular side. The chain crosses the membrane as a helical span at residues 446–466 (VFSLLMGISNGYFGSVPMILA). Topologically, residues 467–481 (AGKVSPKQRELAGNT) are cytoplasmic. The helical transmembrane segment at 482–504 (MTVSYMSGLTLGSAVAYCTYSLT) threads the bilayer. Over 505–528 (RDAHGSCFQTATAAAANDSIPVGP) the chain is Extracellular. An N-linked (GlcNAc...) asparagine glycan is attached at Asn-521.

It belongs to the SLC29A/ENT transporter (TC 2.A.57) family. N-glycosylated. Expressed in heart. Expressed in choroid plexus.

It is found in the cell membrane. The protein resides in the apical cell membrane. It carries out the reaction serotonin(out) = serotonin(in). It catalyses the reaction dopamine(out) = dopamine(in). The enzyme catalyses (R)-noradrenaline(out) = (R)-noradrenaline(in). The catalysed reaction is (R)-adrenaline(out) = (R)-adrenaline(in). It carries out the reaction histamine(out) = histamine(in). It catalyses the reaction tyramine(in) = tyramine(out). The enzyme catalyses guanidine(out) = guanidine(in). The catalysed reaction is adenine(out) = adenine(in). It carries out the reaction adenosine(in) = adenosine(out). Activated at acidic pH. In terms of biological role, electrogenic voltage-dependent transporter that mediates the transport of a variety of endogenous bioactive amines, cationic xenobiotics and drugs. Utilizes the physiologic inside-negative membrane potential as a driving force to facilitate cellular uptake of organic cations. Functions as a Na(+)- and Cl(-)-independent bidirectional transporter. Substrate transport is pH-dependent and enhanced under acidic condition, which is most likely the result of allosteric changes in the transporter structure. Implicated in monoamine neurotransmitters uptake such as serotonin, dopamine, adrenaline/epinephrine, noradrenaline/norepinephrine, histamine and tyramine, thereby supporting a role in homeostatic regulation of aminergic neurotransmission in the central nervous system. Also responsible for the uptake of bioactive amines and drugs through the blood-cerebrospinal fluid (CSF) barrier, from the CSF into choroid plexus epithelial cells, thereby playing a significant role in the clearance of cationic neurotoxins, xenobiotics and metabolic waste in the brain. Involved in bidirectional transport of the purine nucleoside adenosine and plays a role in the regulation of extracellular adenosine concentrations in cardiac tissues, in particular during ischemia. May be involved in organic cation uptake from the tubular lumen into renal tubular cells, thereby contributing to organic cation reabsorption in the kidney. Also transports adenine and guanidine. The polypeptide is Equilibrative nucleoside transporter 4 (Mus musculus (Mouse)).